Reading from the N-terminus, the 287-residue chain is Ethylene-inducing xylanase 3 (287 aa).

The signal sequence occupies residues 1–19; the sequence is MVCFSSLFVAASAIAVVFA. Residues 31–219 enclose the GH11 domain; that stretch reads QSTPSSQGTH…SSGSARINVA (189 aa). The Nucleophile role is filled by glutamate 115. The active-site Proton donor is glutamate 206. The CBM1 domain occupies 252-287; sequence SCAARWGQCGGSGWNGATCCSAGTCQAQNQWYSQCL.

The protein belongs to the glycosyl hydrolase 11 (cellulase G) family.

The catalysed reaction is Endohydrolysis of (1-&gt;4)-beta-D-xylosidic linkages in xylans.. Its pathway is glycan degradation; xylan degradation. In terms of biological role, endo-1,4-beta-xylanase involved in the hydrolysis of xylan, a major structural heterogeneous polysaccharide found in plant biomass representing the second most abundant polysaccharide in the biosphere, after cellulose. Exhibits immunity-inducing activity and induces cell death in Nicotiana benthamiana. The sequence is that of Ethylene-inducing xylanase 3 from Verticillium longisporum (Verticillium dahliae var. longisporum).